Consider the following 159-residue polypeptide: Phosphopantetheine adenylyltransferase (159 aa).

T10 provides a ligand contact to substrate. ATP is bound by residues 10–11 and H18; that span reads TF. Positions 42, 74, and 88 each coordinate substrate. ATP-binding positions include 89–91, E99, and 124–130; these read GLR and WSFISSS.

The protein belongs to the bacterial CoaD family. As to quaternary structure, homohexamer. Requires Mg(2+) as cofactor.

It localises to the cytoplasm. It catalyses the reaction (R)-4'-phosphopantetheine + ATP + H(+) = 3'-dephospho-CoA + diphosphate. It functions in the pathway cofactor biosynthesis; coenzyme A biosynthesis; CoA from (R)-pantothenate: step 4/5. Reversibly transfers an adenylyl group from ATP to 4'-phosphopantetheine, yielding dephospho-CoA (dPCoA) and pyrophosphate. The sequence is that of Phosphopantetheine adenylyltransferase from Salmonella choleraesuis (strain SC-B67).